The primary structure comprises 61 residues: U-scoloptoxin(14)-Sm1a (61 aa).

The N-terminal stretch at 1–24 (MNPKLCMLLLVCLMAFYVIETVQA) is a signal peptide.

Belongs to the scoloptoxin-14 family. Post-translationally, contains 4 disulfide bonds. In terms of tissue distribution, expressed by the venom gland.

The protein localises to the secreted. The sequence is that of U-scoloptoxin(14)-Sm1a from Scolopendra morsitans (Tanzanian blue ringleg centipede).